The sequence spans 232 residues: Orotidine 5'-phosphate decarboxylase (232 aa).

Substrate contacts are provided by residues aspartate 13, lysine 35, 62–71, threonine 122, arginine 182, glutamine 191, glycine 211, and arginine 212; that span reads DLKFHDIPNT. Residue lysine 64 is the Proton donor of the active site.

It belongs to the OMP decarboxylase family. Type 1 subfamily. Homodimer.

The enzyme catalyses orotidine 5'-phosphate + H(+) = UMP + CO2. It participates in pyrimidine metabolism; UMP biosynthesis via de novo pathway; UMP from orotate: step 2/2. In terms of biological role, catalyzes the decarboxylation of orotidine 5'-monophosphate (OMP) to uridine 5'-monophosphate (UMP). The sequence is that of Orotidine 5'-phosphate decarboxylase from Pseudomonas syringae pv. syringae (strain B728a).